A 565-amino-acid polypeptide reads, in one-letter code: Adenine deaminase (565 aa).

The protein belongs to the metallo-dependent hydrolases superfamily. Adenine deaminase family. The cofactor is Mn(2+).

It catalyses the reaction adenine + H2O + H(+) = hypoxanthine + NH4(+). The protein is Adenine deaminase of Gluconobacter oxydans (strain 621H) (Gluconobacter suboxydans).